A 319-amino-acid chain; its full sequence is Lambda-crystallin homolog (319 aa).

Residue alanine 2 is modified to N-acetylalanine. A Phosphoserine modification is found at serine 3. Residues 16-17 (VI), aspartate 36, glutamate 97, and lysine 102 contribute to the NAD(+) site. At serine 111 the chain carries Phosphoserine.

The protein belongs to the 3-hydroxyacyl-CoA dehydrogenase family. Homodimer. As to expression, widely expressed, with highest levels in liver and kidney.

Its subcellular location is the cytoplasm. The catalysed reaction is L-gulonate + NAD(+) = 3-dehydro-L-gulonate + NADH + H(+). Its activity is regulated as follows. Inhibited by malonate. Has high L-gulonate 3-dehydrogenase activity. It also exhibits low dehydrogenase activity toward L-3-hydroxybutyrate (HBA) and L-threonate. The protein is Lambda-crystallin homolog (CRYL1) of Homo sapiens (Human).